A 120-amino-acid polypeptide reads, in one-letter code: Ribonuclease P protein component 2 (120 aa).

Belongs to the eukaryotic/archaeal RNase P protein component 2 family. As to quaternary structure, homodimer in solution. Component of RNase P which consists of a catalytic RNA component and at least 5 protein subunits. Forms a heterotetrameric subcomplex with Rnp3. Reconstituted enzyme missing individual protein subunits is suboptimally active, showing each subunit contributes to optimization of activity.

The protein localises to the cytoplasm. The catalysed reaction is Endonucleolytic cleavage of RNA, removing 5'-extranucleotides from tRNA precursor.. In terms of biological role, part of ribonuclease P, a protein complex that generates mature tRNA molecules by cleaving their 5'-ends. The polypeptide is Ribonuclease P protein component 2 (Pyrococcus horikoshii (strain ATCC 700860 / DSM 12428 / JCM 9974 / NBRC 100139 / OT-3)).